The sequence spans 453 residues: Ethanolamine ammonia-lyase large subunit (453 aa).

Residues R160 to Q162 and N193 each bind substrate. Residues P194 and Q246 each contribute to the adenosylcob(III)alamin site. E287 is a substrate binding site. S295 is an adenosylcob(III)alamin binding site. Position 362 (D362) interacts with substrate. Residue M401 coordinates adenosylcob(III)alamin.

This sequence belongs to the EutB family. As to quaternary structure, the basic unit is a heterodimer which dimerizes to form tetramers. The heterotetramers trimerize; 6 large subunits form a core ring with 6 small subunits projecting outwards. The cofactor is adenosylcob(III)alamin.

The protein resides in the bacterial microcompartment. It carries out the reaction ethanolamine = acetaldehyde + NH4(+). The protein operates within amine and polyamine degradation; ethanolamine degradation. Its function is as follows. Catalyzes the deamination of various vicinal amino-alcohols to oxo compounds. It is spontaneously inactivated by its substrate and reactivated by EutA. May play a role in BMC assembly or maintenance. Functionally, expression of the eut operon allows this bacteria to use ethanolamine (EA) as a carbon, nitrogen and energy source. It relies on cobalamin (vitamin B12) both as a cofactor for the ethanolamine ammonia-lyase activity and to induce the operon. EA enhances bacterial survival in macrophages in a concentration-dependent manner, suggesting it is an important nutrient during infection. The polypeptide is Ethanolamine ammonia-lyase large subunit (Salmonella typhimurium (strain LT2 / SGSC1412 / ATCC 700720)).